The following is a 213-amino-acid chain: Orotate phosphoribosyltransferase (213 aa).

Lys-26 contributes to the 5-phospho-alpha-D-ribose 1-diphosphate binding site. 34 to 35 (FF) contacts orotate. 5-phospho-alpha-D-ribose 1-diphosphate is bound by residues 72–73 (YK), Arg-98, Lys-99, Lys-102, His-104, and 123–131 (DDVISAGTS). Ser-127 and Arg-155 together coordinate orotate.

It belongs to the purine/pyrimidine phosphoribosyltransferase family. PyrE subfamily. As to quaternary structure, homodimer. Requires Mg(2+) as cofactor.

It catalyses the reaction orotidine 5'-phosphate + diphosphate = orotate + 5-phospho-alpha-D-ribose 1-diphosphate. It functions in the pathway pyrimidine metabolism; UMP biosynthesis via de novo pathway; UMP from orotate: step 1/2. Functionally, catalyzes the transfer of a ribosyl phosphate group from 5-phosphoribose 1-diphosphate to orotate, leading to the formation of orotidine monophosphate (OMP). This Neisseria meningitidis serogroup C (strain 053442) protein is Orotate phosphoribosyltransferase.